Reading from the N-terminus, the 354-residue chain is Transcription factor BHLH3 (354 aa).

The segment at 124 to 143 is disordered; the sequence is VAEEETSGDKALLHGGGGSS. The basic motif stretch occupies residues 178 to 191; the sequence is GTPSKNLMAERRRR. The region spanning 178-227 is the bHLH domain; sequence GTPSKNLMAERRRRKRLNDRLSMLRSIVPKISKMDRTSILGDTIDYVKEL. Positions 192-227 are helix-loop-helix motif; that stretch reads KRLNDRLSMLRSIVPKISKMDRTSILGDTIDYVKEL.

It belongs to the bHLH protein family. Interacts with LAX1. Post-translationally, phosphorylated by MAPK3 and MAPK6.

It is found in the nucleus. The protein resides in the cytoplasm. Functionally, transcription factor involved in defense responses that functions downstream of RAC1 and upstream of PAL1 and WRKY19 genes. This is Transcription factor BHLH3 from Oryza sativa subsp. japonica (Rice).